A 350-amino-acid polypeptide reads, in one-letter code: Flap endonuclease 1 (350 aa).

The tract at residues Met1 to Lys101 is N-domain. The Mg(2+) site is built by Asp30, Asp83, Glu155, Glu157, Asp176, Asp178, and Asp239. Residues Glu119–Gly261 are I-domain. The tract at residues Arg341 to Phe349 is interaction with PCNA.

It belongs to the XPG/RAD2 endonuclease family. FEN1 subfamily. In terms of assembly, interacts with PCNA. PCNA stimulates the nuclease activity without altering cleavage specificity. It depends on Mg(2+) as a cofactor.

Its function is as follows. Structure-specific nuclease with 5'-flap endonuclease and 5'-3' exonuclease activities involved in DNA replication and repair. During DNA replication, cleaves the 5'-overhanging flap structure that is generated by displacement synthesis when DNA polymerase encounters the 5'-end of a downstream Okazaki fragment. Binds the unpaired 3'-DNA end and kinks the DNA to facilitate 5' cleavage specificity. Cleaves one nucleotide into the double-stranded DNA from the junction in flap DNA, leaving a nick for ligation. Also involved in the base excision repair (BER) pathway. Acts as a genome stabilization factor that prevents flaps from equilibrating into structures that lead to duplications and deletions. Also possesses 5'-3' exonuclease activity on nicked or gapped double-stranded DNA. The sequence is that of Flap endonuclease 1 from Aeropyrum pernix (strain ATCC 700893 / DSM 11879 / JCM 9820 / NBRC 100138 / K1).